The sequence spans 470 residues: Aminoacyl transferase sphA (470 aa).

Positions 212, 244, and 272 each coordinate pyridoxal 5'-phosphate. Lys-275 carries the N6-(pyridoxal phosphate)lysine modification.

The protein belongs to the class-II pyridoxal-phosphate-dependent aminotransferase family. BioF subfamily. In terms of assembly, homodimer. Pyridoxal 5'-phosphate is required as a cofactor.

Its pathway is secondary metabolite biosynthesis. In terms of biological role, aminoacyl transferase; part of the gene cluster that mediates the biosynthesis of sphingofungins, bioactive molecules acting as sphingolipid inhibitors via inhibiting serine palmitoyl transferase (SPT). Within the pathway, sphA transfers 2-methyl-aminomalonate and 2-hydroxymethyl-aminomalonate onto the sphB product 3-hydroxyoctadeca-4,10-dienoyl-ACP to produce the precursors of sphingofungins E and F. The substrate specificity of sphA using 2-methyl-aminomalonate and 2-hydroxymethyl-aminomalonate instread of aminomalonate is responsible for the biosynthesis of sphingofungins E and F but not B and C like in Aspergillus fumigatus. The PKS sphB does not contain any putative thioesterase domain for releasing the nascent polyketide chain and it has been suggested that aminoacyl transferases can facilitate the polyketide chain release. The protein is Aminoacyl transferase sphA of Byssochlamys spectabilis (Paecilomyces variotii).